The chain runs to 217 residues: Probable GTP-binding protein EngB (217 aa).

An EngB-type G domain is found at Gly33–Arg217. Residues Gly41–Ser48, Gly68–Glu72, Asp95–Gly98, Thr162–Asp165, and Thr196–Ser198 contribute to the GTP site. 2 residues coordinate Mg(2+): Ser48 and Thr70.

It belongs to the TRAFAC class TrmE-Era-EngA-EngB-Septin-like GTPase superfamily. EngB GTPase family. It depends on Mg(2+) as a cofactor.

Its function is as follows. Necessary for normal cell division and for the maintenance of normal septation. This chain is Probable GTP-binding protein EngB, found in Rhizobium meliloti (strain 1021) (Ensifer meliloti).